A 417-amino-acid chain; its full sequence is COP9 signalosome complex subunit 7a (417 aa).

In terms of domain architecture, PCI spans 2–179; that stretch reads EQTKALNALE…EMVQINSVAA (178 aa). A disordered region spans residues 240–417; the sequence is DEQKGAVPSS…KRGSKRKLTA (178 aa). Gly residues predominate over residues 263–290; sequence RGGGGGGDGAGAGGSFRGSGYSRGGGLS. 3 stretches are compositionally biased toward low complexity: residues 291 to 311, 320 to 330, and 343 to 352; these read QGYR…SRQQ, SNQSGTNSLLT, and PSAVSPSAAA. Residues 367 to 379 show a composition bias toward gly residues; the sequence is METGSGSGSGPLG. Residues 385–405 show a composition bias toward acidic residues; that stretch reads DMDDSEEDIDDDTMDLDDEGD.

The protein belongs to the CSN7/EIF3M family. CSN7 subfamily. In terms of assembly, component of the COP9 signalosome (CSN) complex.

The protein localises to the cytoplasm. It localises to the nucleus. Its function is as follows. Component of the COP9 signalosome (CSN) complex that acts as an regulator of the ubiquitin (Ubl) conjugation pathway by mediating the deneddylation of the cullin subunit of SCF-type E3 ubiquitin-protein ligase complexes. The CSN complex is involved in the regulation of the circadian clock through its control of the stability of the SCF(FWD1) complex. This Neurospora crassa (strain ATCC 24698 / 74-OR23-1A / CBS 708.71 / DSM 1257 / FGSC 987) protein is COP9 signalosome complex subunit 7a (csn-7a).